A 132-amino-acid polypeptide reads, in one-letter code: D-ribose pyranase (132 aa).

Catalysis depends on histidine 20, which acts as the Proton donor. Residues aspartate 28, histidine 99, and 121-123 (YSN) each bind substrate.

Belongs to the RbsD / FucU family. RbsD subfamily. As to quaternary structure, homodecamer.

The protein localises to the cytoplasm. The catalysed reaction is beta-D-ribopyranose = beta-D-ribofuranose. Its pathway is carbohydrate metabolism; D-ribose degradation; D-ribose 5-phosphate from beta-D-ribopyranose: step 1/2. In terms of biological role, catalyzes the interconversion of beta-pyran and beta-furan forms of D-ribose. The polypeptide is D-ribose pyranase (Pseudomonas putida (strain W619)).